We begin with the raw amino-acid sequence, 114 residues long: DNA-binding protein rrnAC3180 (114 aa).

Positions 1 to 11 (MSGDPSEEELE) are enriched in acidic residues. Residues 1 to 45 (MSGDPSEEELEELRKKKMEQLKEQQGGEGEGQEAAQQQAEAQKQA) form a disordered region. Positions 12–22 (ELRKKKMEQLK) are enriched in basic and acidic residues. The span at 32–45 (QEAAQQQAEAQKQA) shows a compositional bias: low complexity.

Belongs to the PDCD5 family.

In Haloarcula marismortui (strain ATCC 43049 / DSM 3752 / JCM 8966 / VKM B-1809) (Halobacterium marismortui), this protein is DNA-binding protein rrnAC3180.